The sequence spans 734 residues: ABC transporter D family member 1 (734 aa).

Helical transmembrane passes span 52–72 (IIKI…ILFG), 112–132 (FAIG…SIMA), 177–197 (FTTL…VVVY), and 204–224 (TTID…GYLI). The ABC transmembrane type-1 domain occupies 63 to 351 (PLTLFLILFG…VEEEQAKIQF (289 aa)). Residues 271-286 (HPEKRFDNNDYDHGYE) show a composition bias toward basic and acidic residues. The segment at 271–296 (HPEKRFDNNDYDHGYESDDSDQSCDE) is disordered. The stretch at 332–359 (DSNDQKEELLVEEEQAKIQFEALLKNKK) forms a coiled coil. The helical transmembrane segment at 374-394 (LFTYLSPIANYFIIAIPVFFL) threads the bilayer. The 238-residue stretch at 492–729 (ITLDDVTYFT…NNNNTNKIAE (238 aa)) folds into the ABC transporter domain. 525–532 (GPSGSGKS) lines the ATP pocket. Low complexity predominate over residues 712–725 (QSNNINNNNNNNTN). The segment at 712–734 (QSNNINNNNNNNTNKIAEDSVFD) is disordered.

Belongs to the ABC transporter superfamily. ABCD family. Peroxisomal fatty acyl CoA transporter (TC 3.A.1.203) subfamily.

The protein resides in the membrane. The enzyme catalyses (9Z)-octadecenoyl-CoA(in) = (9Z)-octadecenoyl-CoA(out). This Dictyostelium discoideum (Social amoeba) protein is ABC transporter D family member 1 (abcD1).